Reading from the N-terminus, the 1010-residue chain is DENN domain-containing protein 1A (1010 aa).

The 131-residue stretch at 13-143 (FEVYIEVNRP…HGHPIPEPGT (131 aa)) folds into the uDENN domain. In terms of domain architecture, cDENN spans 160 to 296 (ELPSIPENRN…VVSALKNRIR (137 aa)). A dDENN domain is found at 298–375 (MSTTTGDGVA…DGRLDLLNSG (78 aa)). The FXDXF motif motif lies at 378 to 382 (FSDVF). The interval 455 to 554 (GFSTATEEPL…EATVKEPQST (100 aa)) is disordered. A compositionally biased stretch (basic and acidic residues) spans 472-482 (IEKKRGEERRP). A compositionally biased stretch (basic residues) spans 493–502 (PRPHVPRRPK). Residues 509–524 (SRTTAGSSPDQPQQYR) show a composition bias toward polar residues. A compositionally biased stretch (basic and acidic residues) spans 538-548 (SPEKDSSEATV). Residues 560–569 (SLLEDIFSNL) carry the Clathrin box motif.

It localises to the cytoplasmic vesicle. Its subcellular location is the clathrin-coated vesicle membrane. It is found in the presynaptic cell membrane. Guanine nucleotide exchange factor (GEF) regulating clathrin-mediated endocytosis through RAB35 activation. Promotes the exchange of GDP to GTP, converting inactive GDP-bound RAB35 into its active GTP-bound form. Regulates clathrin-mediated endocytosis of synaptic vesicles and mediates exit from early endosomes. Binds phosphatidylinositol-phosphates (PtdInsPs), with some preference for PtdIns(3)P. In Xenopus laevis (African clawed frog), this protein is DENN domain-containing protein 1A (dennd1a).